We begin with the raw amino-acid sequence, 126 residues long: Profilin (126 aa).

The protein belongs to the profilin family. In terms of assembly, occurs in many kinds of cells as a complex with monomeric actin in a 1:1 ratio.

The protein resides in the cytoplasm. Its subcellular location is the cytoskeleton. Binds to actin and affects the structure of the cytoskeleton. At high concentrations, profilin prevents the polymerization of actin, whereas it enhances it at low concentrations. By binding to PIP2, it inhibits the formation of IP3 and DG. The chain is Profilin from Branchiostoma belcheri (Amphioxus).